A 301-amino-acid chain; its full sequence is MKIAVLSRNPRLYSTRRLVEAGTQRGHEMVVIDTLRAYMNIASHKPQIHYRGKPLEGFDAVIPRIGASVTFYGCAVLRQFEMMGVYPLNESVAIARSRDKLRSLQLLSRRGIGLPITGFAHSPDDIPDLIQMVNGAPLVIKVLEGTQGIGVVLCETPQAAESVIEAFMGLKQNIMVQEYIKEAGGADIRCFVVGDKVIASMKRQAKPGEFRSNLHRGGVASLIKITPEERITAIRAAKVMGLSVAGVDILRSNHGPLVMEVNSSPGLEGIEVTTGKNVAGMIIEHLEKNGGPNQTRTKGKG.

The ATP-grasp domain maps to 104-287 (LQLLSRRGIG…VAGMIIEHLE (184 aa)). ATP contacts are provided by residues K141, 178 to 179 (EY), D187, and 211 to 213 (RSN). D248, E260, and N262 together coordinate Mg(2+). D248, E260, and N262 together coordinate Mn(2+).

The protein belongs to the RimK family. It depends on Mg(2+) as a cofactor. Mn(2+) is required as a cofactor.

The sequence is that of Probable alpha-L-glutamate ligase from Pseudomonas putida (strain ATCC 700007 / DSM 6899 / JCM 31910 / BCRC 17059 / LMG 24140 / F1).